Reading from the N-terminus, the 486-residue chain is Cardiolipin synthase A (486 aa).

Transmembrane regions (helical) follow at residues Thr3–Val23 and Met38–Val58. 2 consecutive PLD phosphodiesterase domains span residues Met219–Arg246 and Glu399–Ser426. Active-site residues include His224, Lys226, Asp231, His404, Lys406, and Asp411.

Belongs to the phospholipase D family. Cardiolipin synthase subfamily. ClsA sub-subfamily.

It localises to the cell inner membrane. The enzyme catalyses 2 a 1,2-diacyl-sn-glycero-3-phospho-(1'-sn-glycerol) = a cardiolipin + glycerol. Its function is as follows. Catalyzes the reversible phosphatidyl group transfer from one phosphatidylglycerol molecule to another to form cardiolipin (CL) (diphosphatidylglycerol) and glycerol. In Salmonella choleraesuis (strain SC-B67), this protein is Cardiolipin synthase A.